A 431-amino-acid polypeptide reads, in one-letter code: Glutamate-1-semialdehyde 2,1-aminomutase (431 aa).

Lys-269 carries the N6-(pyridoxal phosphate)lysine modification.

This sequence belongs to the class-III pyridoxal-phosphate-dependent aminotransferase family. HemL subfamily. Homodimer. The cofactor is pyridoxal 5'-phosphate.

The protein localises to the cytoplasm. The catalysed reaction is (S)-4-amino-5-oxopentanoate = 5-aminolevulinate. It participates in porphyrin-containing compound metabolism; protoporphyrin-IX biosynthesis; 5-aminolevulinate from L-glutamyl-tRNA(Glu): step 2/2. This chain is Glutamate-1-semialdehyde 2,1-aminomutase, found in Francisella tularensis subsp. mediasiatica (strain FSC147).